Here is a 174-residue protein sequence, read N- to C-terminus: Frataxin homolog, mitochondrial (174 aa).

The N-terminal 21 residues, 1–21, are a transit peptide targeting the mitochondrion; that stretch reads MIKRSLASLVRVSSVMGRRYM.

It belongs to the frataxin family. In terms of assembly, monomer. Forms a 24-mer complex made up of 8 copies of a trimeric subcomplex. Increments in mitochondrial iron uptake induce stepwise assembly of species ranging from trimers to 24-mers. Interacts with ISU1 with a 1 to 1 stoichiometry; the interaction is direct. Interacts with YHB1, SDH1, SDH2, AIM45 and CIR1. Post-translationally, processed in two steps by mitochondrial processing peptidase (MPP). MPP first cleaves the precursor to intermediate form and subsequently converts the intermediate to mature size protein.

It is found in the mitochondrion matrix. The enzyme catalyses 4 Fe(2+) + O2 + 4 H(+) = 4 Fe(3+) + 2 H2O. Promotes the biosynthesis of heme as well as the assembly and repair of iron-sulfur clusters by delivering Fe(2+) to proteins involved in these pathways. Plays a role in the protection against iron-catalyzed oxidative stress through its ability to catalyze the oxidation of Fe(2+) to Fe(3+). Can store large amounts of the metal in the form of a ferrihydrite mineral by oligomerization. May be involved in regulation of the mitochondrial electron transport chain. This Saccharomyces cerevisiae (strain ATCC 204508 / S288c) (Baker's yeast) protein is Frataxin homolog, mitochondrial.